A 284-amino-acid polypeptide reads, in one-letter code: Nucleotide-binding protein CPS_4546 (284 aa).

Residue 8-15 coordinates ATP; the sequence is GRSGSGKS. Position 56 to 59 (56 to 59) interacts with GTP; it reads DVRN.

This sequence belongs to the RapZ-like family.

Functionally, displays ATPase and GTPase activities. This Colwellia psychrerythraea (strain 34H / ATCC BAA-681) (Vibrio psychroerythus) protein is Nucleotide-binding protein CPS_4546.